The following is a 196-amino-acid chain: Dehydrogenase RED3 (196 aa).

Ser47, Asp74, Asn101, Arg134, Tyr166, and Lys170 together coordinate NADP(+). Tyr166 acts as the Proton acceptor in catalysis. The active-site Lowers pKa of active site Tyr is the Lys170.

This sequence belongs to the short-chain dehydrogenases/reductases (SDR) family.

It catalyses the reaction a primary alcohol + NAD(+) = an aldehyde + NADH + H(+). The catalysed reaction is a secondary alcohol + NAD(+) = a ketone + NADH + H(+). It functions in the pathway mycotoxin biosynthesis. In terms of biological role, dehydrogenase; part of the Tox1B locus, one of the 2 loci that mediate the biosynthesis of T-toxin, a family of linear polyketides 37 to 45 carbons in length, of which the major component is 41 carbons, and which leads to high virulence to maize. One of the PKSs (PKS1 or PKS2) could synthesize a precursor, used subsequently by the other PKS as starter unit, to add additional carbons. Variability in the length of the final carbon backbone C35-47 could be achieved by varying the number of condensation cycles, or use of different starter or extender units or might be due to decarboxylation of the penultimate product, catalyzed by DEC1. Additional proteins are required for the biosynthesis of T-toxin, including oxidoreductases RED1, RED2, RED3, LAM1 and OXI1, as well as esterase TOX9. This chain is Dehydrogenase RED3, found in Cochliobolus heterostrophus (strain C4 / ATCC 48331 / race T) (Southern corn leaf blight fungus).